A 353-amino-acid polypeptide reads, in one-letter code: Photosystem II protein D1 (353 aa).

An N-acetylthreonine modification is found at Thr-2. Thr-2 is modified (phosphothreonine). Transmembrane regions (helical) follow at residues Tyr-29 to Ser-46, His-118 to Leu-133, and Trp-142 to Ala-156. His-118 provides a ligand contact to chlorophyll a. Tyr-126 contacts pheophytin a. 2 residues coordinate [CaMn4O5] cluster: Asp-170 and Glu-189. Residues Phe-197–Leu-218 form a helical membrane-spanning segment. His-198 contributes to the chlorophyll a binding site. A quinone-binding positions include His-215 and Ser-264 to Phe-265. His-215 contacts Fe cation. His-272 serves as a coordination point for Fe cation. The chain crosses the membrane as a helical span at residues Phe-274–Leu-288. [CaMn4O5] cluster contacts are provided by His-332, Glu-333, Asp-342, and Ala-344. A propeptide spanning residues Ala-345 to Gly-353 is cleaved from the precursor.

The protein belongs to the reaction center PufL/M/PsbA/D family. In terms of assembly, PSII is composed of 1 copy each of membrane proteins PsbA, PsbB, PsbC, PsbD, PsbE, PsbF, PsbH, PsbI, PsbJ, PsbK, PsbL, PsbM, PsbT, PsbX, PsbY, PsbZ, Psb30/Ycf12, at least 3 peripheral proteins of the oxygen-evolving complex and a large number of cofactors. It forms dimeric complexes. The D1/D2 heterodimer binds P680, chlorophylls that are the primary electron donor of PSII, and subsequent electron acceptors. It shares a non-heme iron and each subunit binds pheophytin, quinone, additional chlorophylls, carotenoids and lipids. D1 provides most of the ligands for the Mn4-Ca-O5 cluster of the oxygen-evolving complex (OEC). There is also a Cl(-1) ion associated with D1 and D2, which is required for oxygen evolution. The PSII complex binds additional chlorophylls, carotenoids and specific lipids. serves as cofactor. In terms of processing, tyr-161 forms a radical intermediate that is referred to as redox-active TyrZ, YZ or Y-Z. Post-translationally, C-terminally processed by CTPA; processing is essential to allow assembly of the oxygen-evolving complex and thus photosynthetic growth.

Its subcellular location is the plastid. It localises to the chloroplast thylakoid membrane. It carries out the reaction 2 a plastoquinone + 4 hnu + 2 H2O = 2 a plastoquinol + O2. Functionally, photosystem II (PSII) is a light-driven water:plastoquinone oxidoreductase that uses light energy to abstract electrons from H(2)O, generating O(2) and a proton gradient subsequently used for ATP formation. It consists of a core antenna complex that captures photons, and an electron transfer chain that converts photonic excitation into a charge separation. The D1/D2 (PsbA/PsbD) reaction center heterodimer binds P680, the primary electron donor of PSII as well as several subsequent electron acceptors. The polypeptide is Photosystem II protein D1 (Amaranthus hybridus (Slim amaranth)).